Reading from the N-terminus, the 392-residue chain is Queuine tRNA-ribosyltransferase (392 aa).

Aspartate 93 functions as the Proton acceptor in the catalytic mechanism. Residues 93–97, aspartate 147, glutamine 189, and glycine 216 each bind substrate; that span reads DSGGY. The segment at 247 to 253 is RNA binding; it reads GVGAPED. Aspartate 266 (nucleophile) is an active-site residue. An RNA binding; important for wobble base 34 recognition region spans residues 271–275; the sequence is TRVAR. The Zn(2+) site is built by cysteine 304, cysteine 306, cysteine 309, and histidine 335.

The protein belongs to the queuine tRNA-ribosyltransferase family. In terms of assembly, homodimer. Within each dimer, one monomer is responsible for RNA recognition and catalysis, while the other monomer binds to the replacement base PreQ1. Zn(2+) serves as cofactor.

The enzyme catalyses 7-aminomethyl-7-carbaguanine + guanosine(34) in tRNA = 7-aminomethyl-7-carbaguanosine(34) in tRNA + guanine. Its pathway is tRNA modification; tRNA-queuosine biosynthesis. In terms of biological role, catalyzes the base-exchange of a guanine (G) residue with the queuine precursor 7-aminomethyl-7-deazaguanine (PreQ1) at position 34 (anticodon wobble position) in tRNAs with GU(N) anticodons (tRNA-Asp, -Asn, -His and -Tyr). Catalysis occurs through a double-displacement mechanism. The nucleophile active site attacks the C1' of nucleotide 34 to detach the guanine base from the RNA, forming a covalent enzyme-RNA intermediate. The proton acceptor active site deprotonates the incoming PreQ1, allowing a nucleophilic attack on the C1' of the ribose to form the product. After dissociation, two additional enzymatic reactions on the tRNA convert PreQ1 to queuine (Q), resulting in the hypermodified nucleoside queuosine (7-(((4,5-cis-dihydroxy-2-cyclopenten-1-yl)amino)methyl)-7-deazaguanosine). In Dehalococcoides mccartyi (strain ATCC BAA-2100 / JCM 16839 / KCTC 5957 / BAV1), this protein is Queuine tRNA-ribosyltransferase.